A 551-amino-acid polypeptide reads, in one-letter code: Glucose-6-phosphate isomerase (551 aa).

Catalysis depends on E349, which acts as the Proton donor. Active-site residues include H378 and K480.

The protein belongs to the GPI family.

The protein resides in the cytoplasm. The enzyme catalyses alpha-D-glucose 6-phosphate = beta-D-fructose 6-phosphate. It functions in the pathway carbohydrate biosynthesis; gluconeogenesis. Its pathway is carbohydrate degradation; glycolysis; D-glyceraldehyde 3-phosphate and glycerone phosphate from D-glucose: step 2/4. In terms of biological role, catalyzes the reversible isomerization of glucose-6-phosphate to fructose-6-phosphate. This chain is Glucose-6-phosphate isomerase, found in Parasynechococcus marenigrum (strain WH8102).